The chain runs to 236 residues: uncharacterized protein (236 aa).

A signal peptide spans 1–23 (MRRILSILVFAIMLAGCSSNAST). The segment at 22 to 62 (STEKQHAGGEKTVKAEPQSTSSQKDSTDDYQPNSQVTDDRT) is disordered. Basic and acidic residues predominate over residues 24 to 35 (EKQHAGGEKTVK).

This is an uncharacterized protein from Bacillus subtilis (strain 168).